The chain runs to 115 residues: Histidine-rich carboxyl terminus protein 1 (115 aa).

A helical transmembrane segment spans residues 9 to 29 (ALVGWITGAAVAVLLLLLLLA). The segment at 86-115 (GLHHHHHPRHTPHHLHHHHHPHRHHPRHAR) is disordered. The span at 87 to 115 (LHHHHHPRHTPHHLHHHHHPHRHHPRHAR) shows a compositional bias: basic residues.

It is found in the membrane. The chain is Histidine-rich carboxyl terminus protein 1 (HRCT1) from Homo sapiens (Human).